Consider the following 249-residue polypeptide: Inner membrane protein pE248R (249 aa).

The N-myristoyl glycine; by host moiety is linked to residue glycine 2. Residues 2–199 (GGSTSKNSFK…ADAISAVFKN (198 aa)) lie on the Cytoplasmic side of the membrane. Residues 200-220 (IMVAAVVIVVIIVGFIAVFYF) form a helical membrane-spanning segment. At 221–249 (LHSRHRHEEEEEAEPLITSKILKNAAVSQ) the chain is on the extracellular side.

Belongs to the asfivirus E248R family. As to quaternary structure, interacts with A151R.

It localises to the host membrane. The protein resides in the virion membrane. Functionally, essential for viral fusion with host endosomal membrane and core release. The protein is Inner membrane protein pE248R of African swine fever virus (isolate Pig/Kenya/KEN-50/1950) (ASFV).